Here is a 470-residue protein sequence, read N- to C-terminus: Aromatic amino acid aminotransferase C569.07 (470 aa).

Belongs to the class-I pyridoxal-phosphate-dependent aminotransferase family. Requires pyridoxal 5'-phosphate as cofactor.

It is found in the cytoplasm. It carries out the reaction an aromatic L-alpha-amino acid + 2-oxoglutarate = an aromatic oxo-acid + L-glutamate. Functionally, has aromatic amino acid transaminase activity. The protein is Aromatic amino acid aminotransferase C569.07 of Schizosaccharomyces pombe (strain 972 / ATCC 24843) (Fission yeast).